The following is a 378-amino-acid chain: O-methyltransferase dpfgI (378 aa).

S-adenosyl-L-methionine is bound by residues 232–233, D257, 279–280, and R295; these read GG and NF. H299 functions as the Proton acceptor in the catalytic mechanism.

The protein belongs to the class I-like SAM-binding methyltransferase superfamily. Cation-independent O-methyltransferase family.

It functions in the pathway secondary metabolite biosynthesis; terpenoid biosynthesis. Functionally, O-methyltransferase; part of the gene cluster that mediates the biosynthesis of diterpenoid pyrones. The first step of the pathway is the synthesis of the alpha-pyrone moiety by the polyketide synthase dpfgA via condensation of one acetyl-CoA starter unit with 3 malonyl-CoA units and 2 methylations. The alpha-pyrone is then combined with geranylgeranyl pyrophosphate (GGPP) formed by the GGPP synthase dpfgD through the action of the prenyltransferase dpfgC to yield a linear alpha-pyrone diterpenoid. Subsequent steps in the diterpenoid pyrone biosynthetic pathway involve the decalin core formation, which is initiated by the epoxidation of the C10-C11 olefin by the FAD-dependent oxidoreductase dpfgE, and is followed by a cyclization cascade catalyzed by the terpene cyclase dpfgB. The short chain dehydrogenase/reductase dpfgG then oxidizes the 8S hydroxy group to a ketone and the short chain dehydrogenase/reductase dpfgH reduces the ketone to the 8R hydroxy group to yield higginsianin B. Higginsianin B is further methylated by the methyltransferase dpfgI to produce the intermediate named FDDP B. The cytochrome P450 monooxygenase dfgpJ then catalyzes a three-step oxidation at C-27 to generate a carboxylic acid as well as C-26 hydroxylation. Finally, methyltransferase dpfgK methylates the carboxylic acid generated by dpfgJ, yielding the final diterpenoid pyrones from the pathway which were named FDDP D and FDDP E. In Gibberella zeae (strain ATCC MYA-4620 / CBS 123657 / FGSC 9075 / NRRL 31084 / PH-1) (Wheat head blight fungus), this protein is O-methyltransferase dpfgI.